Consider the following 185-residue polypeptide: Large ribosomal subunit protein uL5 (185 aa).

It belongs to the universal ribosomal protein uL5 family. As to quaternary structure, part of the 50S ribosomal subunit; part of the 5S rRNA/L5/L18/L25 subcomplex. Contacts the 5S rRNA and the P site tRNA. Forms a bridge to the 30S subunit in the 70S ribosome.

Its function is as follows. This is one of the proteins that bind and probably mediate the attachment of the 5S RNA into the large ribosomal subunit, where it forms part of the central protuberance. In the 70S ribosome it contacts protein S13 of the 30S subunit (bridge B1b), connecting the 2 subunits; this bridge is implicated in subunit movement. Contacts the P site tRNA; the 5S rRNA and some of its associated proteins might help stabilize positioning of ribosome-bound tRNAs. This Rhizobium leguminosarum bv. trifolii (strain WSM2304) protein is Large ribosomal subunit protein uL5.